Consider the following 506-residue polypeptide: Aldehyde dehydrogenase [NAD(P)+] 2 (506 aa).

Glu268 serves as the catalytic Proton acceptor. The Nucleophile role is filled by Cys302.

The protein belongs to the aldehyde dehydrogenase family.

The protein localises to the cytoplasm. The enzyme catalyses an aldehyde + NAD(+) + H2O = a carboxylate + NADH + 2 H(+). It catalyses the reaction 3-aminopropanal + NAD(+) + H2O = beta-alanine + NADH + 2 H(+). In terms of biological role, cytoplasmic aldehyde dehydrogenase involved in ethanol oxidation. Involved in pantothenic acid production through the conversion of 3-aminopropanal to beta-alanine, an intermediate in pantothenic acid (vitamin B5) and coenzyme A (CoA) biosynthesis. In Saccharomyces cerevisiae (strain ATCC 204508 / S288c) (Baker's yeast), this protein is Aldehyde dehydrogenase [NAD(P)+] 2 (ALD3).